The chain runs to 101 residues: Small ribosomal subunit protein uS14 (101 aa).

The protein belongs to the universal ribosomal protein uS14 family. Part of the 30S ribosomal subunit. Contacts proteins S3 and S10.

Its function is as follows. Binds 16S rRNA, required for the assembly of 30S particles and may also be responsible for determining the conformation of the 16S rRNA at the A site. This Escherichia coli O139:H28 (strain E24377A / ETEC) protein is Small ribosomal subunit protein uS14.